A 291-amino-acid polypeptide reads, in one-letter code: Tyrosine-protein kinase PtkA (291 aa).

Positions 1–79 (MSSPRERRPA…RRASSPGESP (79 aa)) are disordered. The segment covering 23-60 (HQTSRSSPDTTAPTGSGLSNRFVNDNGIVTDTTASGTN) has biased composition (polar residues). Residue tyrosine 262 is modified to Phosphotyrosine.

The protein belongs to the HAD-like hydrolase superfamily. CbbY/CbbZ/Gph/YieH family. Interacts with PtpA. Post-translationally, autophosphorylated.

The catalysed reaction is L-tyrosyl-[protein] + ATP = O-phospho-L-tyrosyl-[protein] + ADP + H(+). Functionally, required for growth within macrophages. Catalyzes the phosphorylation of PtpA on the tyrosine residues at positions 128 and 129, thereby increasing PtpA phosphatase activity and promoting pathogenicity. This Mycobacterium bovis (strain ATCC BAA-935 / AF2122/97) protein is Tyrosine-protein kinase PtkA.